The primary structure comprises 243 residues: ATP-dependent dethiobiotin synthetase BioD (243 aa).

12-17 (DVGKTL) is a binding site for ATP. Mg(2+) is bound at residue Thr16. Lys37 is an active-site residue. Ser41 contributes to the substrate binding site. ATP is bound by residues Asp54, 115–118 (EGCG), and 179–180 (NM). Positions 54 and 115 each coordinate Mg(2+).

The protein belongs to the dethiobiotin synthetase family. Homodimer. It depends on Mg(2+) as a cofactor.

Its subcellular location is the cytoplasm. The catalysed reaction is (7R,8S)-7,8-diammoniononanoate + CO2 + ATP = (4R,5S)-dethiobiotin + ADP + phosphate + 3 H(+). It functions in the pathway cofactor biosynthesis; biotin biosynthesis; biotin from 7,8-diaminononanoate: step 1/2. Functionally, catalyzes a mechanistically unusual reaction, the ATP-dependent insertion of CO2 between the N7 and N8 nitrogen atoms of 7,8-diaminopelargonic acid (DAPA, also called 7,8-diammoniononanoate) to form a ureido ring. The sequence is that of ATP-dependent dethiobiotin synthetase BioD from Caldicellulosiruptor saccharolyticus (strain ATCC 43494 / DSM 8903 / Tp8T 6331).